Consider the following 150-residue polypeptide: Transcriptional repressor NrdR (150 aa).

The segment at 3 to 34 (CPFCGYEDTFVIDTREIEDQRVIRRRRECPNC) is a zinc-finger region. An ATP-cone domain is found at 49–139 (IMVIKKDGRR…VYQEFSSLEE (91 aa)).

The protein belongs to the NrdR family. Requires Zn(2+) as cofactor.

Its function is as follows. Negatively regulates transcription of bacterial ribonucleotide reductase nrd genes and operons by binding to NrdR-boxes. This Dictyoglomus thermophilum (strain ATCC 35947 / DSM 3960 / H-6-12) protein is Transcriptional repressor NrdR.